A 207-amino-acid polypeptide reads, in one-letter code: Large ribosomal subunit protein uL4 (207 aa).

The segment at 49 to 78 is disordered; that stretch reads HAVKNRSAVRGGGRKPWRQKGTGRARQGSI. Residues 60–71 are compositionally biased toward basic residues; it reads GGRKPWRQKGTG.

Belongs to the universal ribosomal protein uL4 family. In terms of assembly, part of the 50S ribosomal subunit.

Functionally, one of the primary rRNA binding proteins, this protein initially binds near the 5'-end of the 23S rRNA. It is important during the early stages of 50S assembly. It makes multiple contacts with different domains of the 23S rRNA in the assembled 50S subunit and ribosome. Forms part of the polypeptide exit tunnel. The sequence is that of Large ribosomal subunit protein uL4 from Enterococcus faecalis (strain ATCC 700802 / V583).